A 122-amino-acid chain; its full sequence is Large ribosomal subunit protein uL14 (122 aa).

This sequence belongs to the universal ribosomal protein uL14 family. In terms of assembly, part of the 50S ribosomal subunit. Forms a cluster with proteins L3 and L19. In the 70S ribosome, L14 and L19 interact and together make contacts with the 16S rRNA in bridges B5 and B8.

Functionally, binds to 23S rRNA. Forms part of two intersubunit bridges in the 70S ribosome. This chain is Large ribosomal subunit protein uL14, found in Lysinibacillus sphaericus (strain C3-41).